We begin with the raw amino-acid sequence, 299 residues long: Oxygen-dependent coproporphyrinogen-III oxidase (299 aa).

Substrate is bound at residue serine 92. 2 residues coordinate a divalent metal cation: histidine 96 and histidine 106. Histidine 106 functions as the Proton donor in the catalytic mechanism. Residue 108–110 coordinates substrate; the sequence is NVR. A divalent metal cation-binding residues include histidine 145 and histidine 175. The segment at 239 to 274 is important for dimerization; that stretch reads YVEFNLVYDRGTLFGLQSGGRAESILMSLPPQVRWE. Residue 257-259 coordinates substrate; that stretch reads GGR.

Belongs to the aerobic coproporphyrinogen-III oxidase family. In terms of assembly, homodimer. Requires a divalent metal cation as cofactor.

The protein localises to the cytoplasm. The enzyme catalyses coproporphyrinogen III + O2 + 2 H(+) = protoporphyrinogen IX + 2 CO2 + 2 H2O. It participates in porphyrin-containing compound metabolism; protoporphyrin-IX biosynthesis; protoporphyrinogen-IX from coproporphyrinogen-III (O2 route): step 1/1. Involved in the heme biosynthesis. Catalyzes the aerobic oxidative decarboxylation of propionate groups of rings A and B of coproporphyrinogen-III to yield the vinyl groups in protoporphyrinogen-IX. The protein is Oxygen-dependent coproporphyrinogen-III oxidase of Xanthomonas campestris pv. campestris (strain 8004).